Here is a 35-residue protein sequence, read N- to C-terminus: MSDIN-like toxin proprotein 8 (35 aa).

Residues 1 to 10 constitute a propeptide that is removed on maturation; the sequence is MSDINATRLP. Residues 11-18 constitute a cross-link (cyclopeptide (Phe-Pro)); it reads FVFVASPP. A propeptide spanning residues 19 to 35 is cleaved from the precursor; the sequence is CVGDDIAMVLTRGENLC.

This sequence belongs to the MSDIN fungal toxin family. Post-translationally, processed by the macrocyclase-peptidase enzyme POPB to yield a toxic cyclic octapeptide. POPB first removes 10 residues from the N-terminus. Conformational trapping of the remaining peptide forces the enzyme to release this intermediate rather than proceed to macrocyclization. The enzyme rebinds the remaining peptide in a different conformation and catalyzes macrocyclization of the N-terminal 8 residues. Expressed in basidiocarps.

In terms of biological role, probable toxin that belongs to the MSDIN-like toxin family responsible for a large number of food poisoning cases and deaths. This chain is MSDIN-like toxin proprotein 8, found in Amanita exitialis (Guangzhou destroying angel).